A 102-amino-acid polypeptide reads, in one-letter code: QLAEQYPPHPYSFSYDATDETGARISTSESGDESNSKTGSYSYQTPDGVYRTVNYVADATGFHASIDTNEPGTKSEAPADVTINANPIEVKEAYAFKAKSAA.

The residue at position 1 (Gln1) is a Pyrrolidone carboxylic acid. Positions 1-45 are disordered; that stretch reads QLAEQYPPHPYSFSYDATDETGARISTSESGDESNSKTGSYSYQT. The region spanning 8 to 74 is the Chitin-binding type R&amp;R domain; that stretch reads PHPYSFSYDA…SIDTNEPGTK (67 aa). Polar residues predominate over residues 36–45; that stretch reads SKTGSYSYQT.

Component of the cuticle of the tick. Binds chitin. The chain is Cuticle protein 10.9 from Ixodes ricinus (Common tick).